The chain runs to 215 residues: Guanylate kinase (215 aa).

The Guanylate kinase-like domain maps to 9 to 187; sequence GTLYIVSAPS…ALDELSCLVH (179 aa). 16-23 is an ATP binding site; sequence APSGAGKT.

The protein belongs to the guanylate kinase family.

The protein localises to the cytoplasm. It carries out the reaction GMP + ATP = GDP + ADP. Essential for recycling GMP and indirectly, cGMP. This is Guanylate kinase from Chromohalobacter salexigens (strain ATCC BAA-138 / DSM 3043 / CIP 106854 / NCIMB 13768 / 1H11).